The primary structure comprises 187 residues: Troponin I, slow skeletal muscle (187 aa).

N-acetylproline is present on P2. An involved in binding TNC region spans residues 2 to 48 (PEVERKSKITASRKLMLKSLMLAKAKECWEQEHEEREAEKVRYLSER). At S58 the chain carries Phosphoserine. The segment at 97–118 (LKLKVLDLRGKFKRPPLRRVRV) is involved in binding TNC and actin.

This sequence belongs to the troponin I family. As to quaternary structure, binds to actin and tropomyosin.

In terms of biological role, troponin I is the inhibitory subunit of troponin, the thin filament regulatory complex which confers calcium-sensitivity to striated muscle actomyosin ATPase activity. The sequence is that of Troponin I, slow skeletal muscle (Tnni1) from Rattus norvegicus (Rat).